Here is a 466-residue protein sequence, read N- to C-terminus: Putative transcription factor bHLH041 (466 aa).

Disordered regions lie at residues 108–129 (PANSDYLRPPHYPSSSSSSLSP), 194–213 (LTGPSSPPSTSSSPQRKGRA), and 260–289 (RENATTHGEGSGGSGGGGRYTSGPSATQLQ). The span at 120 to 129 (PSSSSSSLSP) shows a compositional bias: low complexity. Residues 268-279 (EGSGGSGGGGRY) show a composition bias toward gly residues. Positions 285–334 (ATQLQHMISERKRREKLNESFQALRSLLPPGTKKDKASVLSIAREQLSSL) constitute a bHLH domain.

In terms of assembly, homodimer.

The protein localises to the nucleus. In Arabidopsis thaliana (Mouse-ear cress), this protein is Putative transcription factor bHLH041 (BHLH41).